A 61-amino-acid chain; its full sequence is Small ribosomal subunit protein uS14 (61 aa).

Zn(2+)-binding residues include cysteine 24, cysteine 27, cysteine 40, and cysteine 43.

Belongs to the universal ribosomal protein uS14 family. Zinc-binding uS14 subfamily. Part of the 30S ribosomal subunit. Contacts proteins S3 and S10. Requires Zn(2+) as cofactor.

Binds 16S rRNA, required for the assembly of 30S particles and may also be responsible for determining the conformation of the 16S rRNA at the A site. The sequence is that of Small ribosomal subunit protein uS14 from Clostridium botulinum (strain ATCC 19397 / Type A).